The following is a 404-amino-acid chain: Putative transporter AmpG 2 (404 aa).

12 helical membrane-spanning segments follow: residues 11-31 (IYNI…YLLT), 49-69 (IGLF…GPLL), 84-104 (YCLI…TGFN), 109-129 (FISF…YDML), 154-174 (FRIG…IISW), 177-197 (VYRT…FYPL), 224-244 (WLII…LAVM), 261-281 (LGYK…GGFL), 294-311 (VLVY…LYSY), 315-337 (ITTL…SPFF), 353-373 (IALI…ISGY), and 378-398 (LGWG…YILI).

This sequence belongs to the major facilitator superfamily.

The protein localises to the cell inner membrane. In Rickettsia bellii (strain RML369-C), this protein is Putative transporter AmpG 2 (ampG2).